Here is a 155-residue protein sequence, read N- to C-terminus: Small ribosomal subunit protein uS9 (155 aa).

It belongs to the universal ribosomal protein uS9 family.

The chain is Small ribosomal subunit protein uS9 from Rhizobium etli (strain ATCC 51251 / DSM 11541 / JCM 21823 / NBRC 15573 / CFN 42).